The following is a 642-amino-acid chain: Frizzled and smoothened-like protein B (642 aa).

An N-terminal signal peptide occupies residues 1-26 (MFNKNNNNNKIIIILKLFLIILIVNN). Topologically, residues 27–264 (NNNIKTFGLN…KWHQMYNMSK (238 aa)) are extracellular. Positions 47 to 197 (DPTATCSNYI…GFFPVPCSDP (151 aa)) constitute an FZ domain. 3 disulfide bridges follow: Cys52–Cys123, Cys65–Cys116, and Cys143–Cys194. 7 N-linked (GlcNAc...) asparagine glycosylation sites follow: Asn80, Asn153, Asn162, Asn177, Asn203, Asn222, and Asn261. The chain crosses the membrane as a helical span at residues 265 to 285 (ILSTISFVCSIYNVLTFGILN). The Cytoplasmic segment spans residues 286-294 (HRRSKYNYC). A helical transmembrane segment spans residues 295–315 (ITFFSASVIIITMMDIVTYGI). The Extracellular portion of the chain corresponds to 316–344 (GYEKLLCPEPGRFAVQSDVSCGATGALFH). A helical transmembrane segment spans residues 345-365 (IGITNGVFWWTTMSICLFAVV). Residues 366–375 (KRIKLFDFRY) are Cytoplasmic-facing. Residues 376–398 (FIIFNTTASLISVIIPLAGNAFM) traverse the membrane as a helical segment. The Extracellular segment spans residues 399–416 (AGTGSLACWIRKTWYVNS). A helical membrane pass occupies residues 417–437 (VFWIPCGIALTIGSVCIILVI). At 438–460 (YEIYKITKNVSTKDNRMILLQIK) the chain is on the cytoplasmic side. Residues 461 to 481 (PFLCVTLVGGSFYYLFIFNFD) traverse the membrane as a helical segment. The N-linked (GlcNAc...) asparagine glycan is linked to Asn482. Over 482-514 (NESHSKEYKEKVVDYVMCLLSDTGKECLMAGPN) the chain is Extracellular. Residues 515–535 (YVAYFVFYFFIRLFGITFFCI) traverse the membrane as a helical segment. Residues 536 to 642 (YGTSQNARDI…INSASNTSSD (107 aa)) lie on the Cytoplasmic side of the membrane. The interval 578-642 (GTNPTSNSKN…INSASNTSSD (65 aa)) is disordered. The segment covering 583–598 (SNSKNSKNNQNNQNNN) has biased composition (low complexity). Residues 584–611 (NSKNSKNNQNNQNNNSRKEFESKNIELE) are a coiled coil. A compositionally biased stretch (basic and acidic residues) spans 599-609 (SRKEFESKNIE). Polar residues-rich tracts occupy residues 614-623 (ESISKGQTTR) and 632-642 (NINSASNTSSD).

Belongs to the G-protein coupled receptor Fz/Smo family.

The protein localises to the membrane. The polypeptide is Frizzled and smoothened-like protein B (fslB) (Dictyostelium discoideum (Social amoeba)).